The primary structure comprises 578 residues: Probable arginine--tRNA ligase, mitochondrial (578 aa).

The N-terminal 16 residues, 1–16, are a transit peptide targeting the mitochondrion; sequence MACGFRRSIASQLSRV. L-arginine-binding positions include 133 to 135, histidine 144, tyrosine 322, aspartate 326, and glutamine 350; that span reads SPN. The short motif at 133–144 is the 'HIGH' region element; the sequence is SPNVAKKFHVGH. An N6-acetyllysine modification is found at lysine 568.

The protein belongs to the class-I aminoacyl-tRNA synthetase family.

It is found in the mitochondrion membrane. The catalysed reaction is tRNA(Arg) + L-arginine + ATP = L-arginyl-tRNA(Arg) + AMP + diphosphate. Functionally, catalyzes the attachment of arginine to tRNA(Arg) in a two-step reaction: arginine is first activated by ATP to form Arg-AMP and then transferred to the acceptor end of tRNA(Arg). This chain is Probable arginine--tRNA ligase, mitochondrial (RARS2), found in Bos taurus (Bovine).